We begin with the raw amino-acid sequence, 350 residues long: Guanine nucleotide-binding protein G(t) subunit alpha-1 (350 aa).

The segment at 1–21 (MGAGASAEEKHSRELEKKLKE) is disordered. The N-myristoyl glycine moiety is linked to residue Gly2. Residues 7 to 21 (AEEKHSRELEKKLKE) are compositionally biased toward basic and acidic residues. The G-alpha domain maps to 28–350 (RTVKLLLLGA…KENLKDCGLF (323 aa)). The G1 motif stretch occupies residues 31-44 (KLLLLGAGESGKST). A GTP-binding site is contributed by 36-43 (GAGESGKS). Ser43 provides a ligand contact to Mg(2+). Tyr142 carries the post-translational modification Phosphotyrosine. Residues Asp146, 171-177 (LRSRVKT), Gly199, 265-268 (NKKD), and Ala322 contribute to the GTP site. The segment at 169–177 (DVLRSRVKT) is G2 motif. Thr177 provides a ligand contact to Mg(2+). The interval 192 to 201 (FRMFDVGGQR) is G3 motif. Positions 261–268 (VLFLNKKD) are G4 motif. The tract at residues 320-325 (TCATDT) is G5 motif. An interaction with RHO region spans residues 340-350 (IKENLKDCGLF).

It belongs to the G-alpha family. G(i/o/t/z) subfamily. In terms of assembly, heterotrimeric G proteins are composed of 3 subunits alpha, beta and gamma. The alpha chain contains the guanine nucleotide binding site. Interacts with RHO. Interacts with RGS9 and PDE6G. Interacts (when myristoylated) with UNC119; interaction is required for localization in sensory neurons. As to expression, in the retina, expressed in the rod photoreceptors.

The protein resides in the cell projection. The protein localises to the cilium. It is found in the photoreceptor outer segment. Its subcellular location is the membrane. It localises to the photoreceptor inner segment. Functionally, functions as a signal transducer for the rod photoreceptor RHO. Required for normal RHO-mediated light perception by the retina. Guanine nucleotide-binding proteins (G proteins) function as transducers downstream of G protein-coupled receptors (GPCRs), such as the photoreceptor RHO. The alpha chain contains the guanine nucleotide binding site and alternates between an active, GTP-bound state and an inactive, GDP-bound state. Activated RHO promotes GDP release and GTP binding. Signaling is mediated via downstream effector proteins, such as cGMP-phosphodiesterase. This chain is Guanine nucleotide-binding protein G(t) subunit alpha-1 (Gnat1), found in Mus musculus (Mouse).